A 216-amino-acid chain; its full sequence is PMKEVSIRGQGSLAYPGLRTQGNLETLNGPNDATRGLTSLADTFEHVIEELLDEQQVIQPSKENKDADLYSSRVMLSSQVPLEPPLLFLLEEYKNYLDAANMSMRVRRHSDPARRGELSVCDSTSEWVTAAEKKTAVDMSGATVTVLEKVPVPKGQLKQYFYETKCSSKGYAKEGCRGIDKRYWNSQCRTTQSYVRALTMDNKKRVGWRFIRIDTS.

Positions 1 to 108 are excised as a propeptide; the sequence is PMKEVSIRGQ…AANMSMRVRR (108 aa). Asparagine 101 carries an N-linked (GlcNAc...) asparagine glycan. An intrachain disulfide couples cysteine 121 to cysteine 188.

The protein belongs to the NGF-beta family.

It is found in the secreted. Functionally, promotes the survival of neuronal populations that are all located either in the central nervous system or directly connected to it. The chain is Neurotrophic factor BDNF precursor form (BDNF) from Cylindrophis ruffus (Red-tailed pipe snake).